The chain runs to 311 residues: UPF0324 membrane protein VV1_3166 (311 aa).

Transmembrane regions (helical) follow at residues 8–28 (FIFA…ALVL), 51–71 (LLSY…AIAV), 74–94 (DGIG…FLVA), 106–126 (LISA…APAI), 133–153 (IALA…IFPV), 165–185 (FGTW…AASA), 197–217 (LKLA…ILFA), 228–248 (LVLP…DLFP), 256–276 (GIFS…GCSI), and 289–309 (LIFG…WLLL).

This sequence belongs to the UPF0324 family.

The protein resides in the cell membrane. The sequence is that of UPF0324 membrane protein VV1_3166 from Vibrio vulnificus (strain CMCP6).